The chain runs to 461 residues: Protein-serine O-palmitoleoyltransferase porcupine (461 aa).

The Cytoplasmic portion of the chain corresponds to M1–C17. The chain crosses the membrane as a helical span at residues L18 to A38. Over C39–H66 the chain is Extracellular. Residues F67–F87 form a helical membrane-spanning segment. Residues L88–R95 lie on the Cytoplasmic side of the membrane. A helical membrane pass occupies residues G96 to D116. Over T117–P152 the chain is Extracellular. A helical membrane pass occupies residues V153–F173. The Cytoplasmic segment spans residues H174 to A198. A helical membrane pass occupies residues L199–I219. Over P220–H252 the chain is Extracellular. The chain crosses the membrane as a helical span at residues F253–F273. Residues T274 to S337 lie on the Cytoplasmic side of the membrane. A helical membrane pass occupies residues A338–T358. Residue H341 is part of the active site. Residues Y359–R396 are Extracellular-facing. The helical transmembrane segment at A397 to F417 threads the bilayer. At D418–G461 the chain is on the cytoplasmic side.

Belongs to the membrane-bound acyltransferase family. Porcupine subfamily. In terms of assembly, interacts with WNT1, WNT3, WNT3A, WNT4, WNT5A, WNT5B, WNT6, WNT7A and WNT7B. Expressed in brain, heart, kidney, liver, lung, muscle, spleen and testis. Isoform 4 is strongly expressed in kidney, liver, lung, spleen and testis. Isoform 1 is strongly expressed in brain, heart and muscle and poorly in kidney, liver, lung, spleen and testis.

The protein resides in the endoplasmic reticulum membrane. The enzyme catalyses [Wnt protein]-L-serine + (9Z)-hexadecenoyl-CoA = [Wnt protein]-O-(9Z)-hexadecenoyl-L-serine + CoA. Functionally, protein-serine O-palmitoleoyltransferase that acts as a key regulator of the Wnt signaling pathway by mediating the attachment of palmitoleate, a 16-carbon monounsaturated fatty acid (C16:1(9Z)), to Wnt proteins. Serine palmitoleoylation of WNT proteins is required for efficient binding to frizzled receptors. The sequence is that of Protein-serine O-palmitoleoyltransferase porcupine from Mus musculus (Mouse).